Consider the following 124-residue polypeptide: Heat-labile enterotoxin B chain (124 aa).

The signal sequence occupies residues 1 to 21; the sequence is MNKVKCYVLFTALLSSLYAHG. The cysteines at positions 30 and 107 are disulfide-linked.

As to quaternary structure, heterohexamer of one A chain and of five B chains.

In terms of biological role, the biological activity of the toxin is produced by the A chain, which activates intracellular adenyl cyclase. The chain is Heat-labile enterotoxin B chain (eltB) from Escherichia coli.